Consider the following 521-residue polypeptide: Ribonuclease Y (521 aa).

The chain crosses the membrane as a helical span at residues 1 to 21; that stretch reads MFFIEHPFVYLGLDLIVGCLI. A KH domain is found at 211–271; the sequence is TVSMVPLPSD…VRREVARLAL (61 aa). Residues 337-430 form the HD domain; sequence VLQHSLEVAF…VQAADALSGA (94 aa).

The protein belongs to the RNase Y family.

It localises to the cell membrane. Endoribonuclease that initiates mRNA decay. The chain is Ribonuclease Y from Desulfotalea psychrophila (strain LSv54 / DSM 12343).